Reading from the N-terminus, the 81-residue chain is Large ribosomal subunit protein bL31B (81 aa).

This sequence belongs to the bacterial ribosomal protein bL31 family. Type B subfamily. Part of the 50S ribosomal subunit.

This chain is Large ribosomal subunit protein bL31B, found in Borreliella burgdorferi (strain ZS7) (Borrelia burgdorferi).